Here is a 126-residue protein sequence, read N- to C-terminus: Thioredoxin H-type 1 (126 aa).

Residues 2–120 (AANDATSSEE…LQQTIVKHAA (119 aa)) enclose the Thioredoxin domain. Residues Cys46 and Cys49 each act as nucleophile in the active site. Cys46 and Cys49 are disulfide-bonded.

The protein belongs to the thioredoxin family. Plant H-type subfamily.

Its subcellular location is the cytoplasm. Its function is as follows. Participates in various redox reactions through the reversible oxidation of the active center dithiol to a disulfide. The H form is known to activate a number of cytosolic enzymes. This chain is Thioredoxin H-type 1, found in Nicotiana tabacum (Common tobacco).